Here is a 100-residue protein sequence, read N- to C-terminus: NADH-quinone oxidoreductase subunit K (100 aa).

3 helical membrane-spanning segments follow: residues 4 to 24 (LNYG…SLLI), 29 to 49 (IFIL…FILI), and 60 to 80 (VLYI…LAIF).

Belongs to the complex I subunit 4L family. NDH-1 is composed of 13 different subunits. Subunits NuoA, H, J, K, L, M, N constitute the membrane sector of the complex.

It localises to the cell membrane. It carries out the reaction a quinone + NADH + 5 H(+)(in) = a quinol + NAD(+) + 4 H(+)(out). In terms of biological role, NDH-1 shuttles electrons from NADH, via FMN and iron-sulfur (Fe-S) centers, to quinones in the respiratory chain. The immediate electron acceptor for the enzyme in this species is believed to be ubiquinone. Couples the redox reaction to proton translocation (for every two electrons transferred, four hydrogen ions are translocated across the cytoplasmic membrane), and thus conserves the redox energy in a proton gradient. This Buchnera aphidicola subsp. Cinara cedri (strain Cc) protein is NADH-quinone oxidoreductase subunit K.